The primary structure comprises 260 residues: Proteasome subunit alpha (260 aa).

The disordered stretch occupies residues 241 to 260 (VEAEEVPEKEEDYSELDSNY). Acidic residues predominate over residues 242–260 (EAEEVPEKEEDYSELDSNY).

The protein belongs to the peptidase T1A family. The 20S proteasome core is composed of 14 alpha and 14 beta subunits that assemble into four stacked heptameric rings, resulting in a barrel-shaped structure. The two inner rings, each composed of seven catalytic beta subunits, are sandwiched by two outer rings, each composed of seven alpha subunits. The catalytic chamber with the active sites is on the inside of the barrel. Has a gated structure, the ends of the cylinder being occluded by the N-termini of the alpha-subunits. Is capped at one or both ends by the proteasome regulatory ATPase, PAN.

The protein localises to the cytoplasm. Its activity is regulated as follows. The formation of the proteasomal ATPase PAN-20S proteasome complex, via the docking of the C-termini of PAN into the intersubunit pockets in the alpha-rings, triggers opening of the gate for substrate entry. Interconversion between the open-gate and close-gate conformations leads to a dynamic regulation of the 20S proteasome proteolysis activity. In terms of biological role, component of the proteasome core, a large protease complex with broad specificity involved in protein degradation. In Thermococcus sibiricus (strain DSM 12597 / MM 739), this protein is Proteasome subunit alpha.